The primary structure comprises 427 residues: Trigger factor (427 aa).

The PPIase FKBP-type domain occupies 163–248 (GDTVVIDFVG…IHEVKAKEVP (86 aa)).

Belongs to the FKBP-type PPIase family. Tig subfamily.

It is found in the cytoplasm. The catalysed reaction is [protein]-peptidylproline (omega=180) = [protein]-peptidylproline (omega=0). Involved in protein export. Acts as a chaperone by maintaining the newly synthesized protein in an open conformation. Functions as a peptidyl-prolyl cis-trans isomerase. In Streptococcus pneumoniae (strain Taiwan19F-14), this protein is Trigger factor.